A 344-amino-acid polypeptide reads, in one-letter code: tRNA N6-adenosine threonylcarbamoyltransferase (344 aa).

Residues H112 and H116 each coordinate Fe cation. Substrate is bound by residues L135 to G139, D168, G181, and N271. D299 lines the Fe cation pocket.

The protein belongs to the KAE1 / TsaD family. It depends on Fe(2+) as a cofactor.

It is found in the cytoplasm. It carries out the reaction L-threonylcarbamoyladenylate + adenosine(37) in tRNA = N(6)-L-threonylcarbamoyladenosine(37) in tRNA + AMP + H(+). Required for the formation of a threonylcarbamoyl group on adenosine at position 37 (t(6)A37) in tRNAs that read codons beginning with adenine. Is involved in the transfer of the threonylcarbamoyl moiety of threonylcarbamoyl-AMP (TC-AMP) to the N6 group of A37, together with TsaE and TsaB. TsaD likely plays a direct catalytic role in this reaction. This is tRNA N6-adenosine threonylcarbamoyltransferase from Sphingopyxis alaskensis (strain DSM 13593 / LMG 18877 / RB2256) (Sphingomonas alaskensis).